A 230-amino-acid polypeptide reads, in one-letter code: Movement and silencing protein TGBp1 (230 aa).

Residues 1–114 (MDSIINALTS…GLALRPHFIK (114 aa)) enclose the (+)RNA virus helicase ATP-binding domain. In terms of domain architecture, (+)RNA virus helicase C-terminal spans 115–230 (SVSHRLCPAT…VRSPPPHPSH (116 aa)).

The protein belongs to the Tymovirales TGBp1 protein family. Homodimer and homooligomer. Interacts with capsid protein. Interacts with host AGO1; this interaction targets the host protein for degradation, thereby suppressing the antiviral RNA silencing.

The protein localises to the host cytoplasm. Transports viral genome to neighboring plant cells directly through plasmosdesmata, without any budding. The movement protein allows efficient cell to cell propagation, by bypassing the host cell wall barrier. Increases plasmodesma size exclusion limit. Acts as a suppressor of RNA-mediated gene silencing, also known as post-transcriptional gene silencing (PTGS), a mechanism of plant viral defense that limits the accumulation of viral RNAs. The chain is Movement and silencing protein TGBp1 from Plantago asiatica (P1AMV).